The sequence spans 449 residues: Telomere resolvase ResT (449 aa).

Requires No cofactors were found to be necessary. as cofactor.

Its subcellular location is the cytoplasm. It localises to the nucleoid. Functionally, catalyzes the conservative, sequence-specific DNA breakage and reunion reaction that generates two hairpin telomeres from a replicated telomere substrate. Breaks two phosphodiester bonds in a single DNA duplex and joins each end with the opposite DNA strand to form covalently closed hairpin telomeres. In vitro relaxed-circular, open-circular and linearized plasmids, but not supercoiled DNA, are all substrates. Cleavage is position-dependent relative to conserved sequence elements. The polypeptide is Telomere resolvase ResT (Borreliella burgdorferi (strain ATCC 35210 / DSM 4680 / CIP 102532 / B31) (Borrelia burgdorferi)).